The following is a 261-amino-acid chain: MELNNVILEKEGKVAVVTINRPKALNALNSDTLKEMDYVIGEIENDSEVLAVILTGAGEKSFVAGADISEMKEMNTIEGRKFGILGNKVFRRLELLEKPVIAAVNGFALGGGCEIAMSCDIRIASSNARFGQPEVGLGITPGFGGTQRLSRLVGMGMAKQLIFTAQNIKADEALRIGLVNKVVEPSELMNTAKEIANKIVSNAPVAVKLSKQAINRGMQCDIDTALAFESEAFGECFSTEDQKDAMTAFIEKRKIEGFKNR.

Glu-114 (nucleophile) is an active-site residue. Glu-134 functions as the Proton acceptor in the catalytic mechanism.

This sequence belongs to the enoyl-CoA hydratase/isomerase family. As to quaternary structure, homotetramer.

The catalysed reaction is a short-chain (3S)-3-hydroxyacyl-CoA = a short-chain (2E)-enoyl-CoA + H2O. Its pathway is lipid metabolism; butanoate metabolism. Catalyzes the reversible hydration of crotonyl-CoA. Can also use hexenoyl-CoA but not higher analogs. In Clostridium acetobutylicum (strain ATCC 824 / DSM 792 / JCM 1419 / IAM 19013 / LMG 5710 / NBRC 13948 / NRRL B-527 / VKM B-1787 / 2291 / W), this protein is Short-chain-enoyl-CoA hydratase (crt).